Consider the following 96-residue polypeptide: RNA-binding protein Hfq (96 aa).

The Sm domain maps to 9 to 68 (DPYLNALRRERIPVSIYLVNGIKLQGQIESFDQFVILLKNTVNQMVYKHAISTVVPARSV). A disordered region spans residues 67–96 (SVSHHNNSNNSNQQNYQQEQQTDSNVEKAE). A compositionally biased stretch (low complexity) spans 72–87 (NNSNNSNQQNYQQEQQ).

It belongs to the Hfq family. Homohexamer.

RNA chaperone that binds small regulatory RNA (sRNAs) and mRNAs to facilitate mRNA translational regulation in response to envelope stress, environmental stress and changes in metabolite concentrations. Also binds with high specificity to tRNAs. The protein is RNA-binding protein Hfq of Pasteurella multocida (strain Pm70).